Consider the following 363-residue polypeptide: Adenosine kinase (363 aa).

Residues Ala-185, Ile-188, and Ala-191 each contribute to the Mg(2+) site. The active site involves Asp-318.

Belongs to the carbohydrate kinase PfkB family. It depends on Mg(2+) as a cofactor.

It catalyses the reaction adenosine + ATP = AMP + ADP + H(+). It functions in the pathway purine metabolism; AMP biosynthesis via salvage pathway; AMP from adenosine: step 1/1. ATP-dependent phosphorylation of adenosine and other related nucleoside analogs to monophosphate derivatives. It is a key purine metabolic enzyme in the opportunistic parasitic protozoan toxoplasma gondii as it cannot synthesize purines de novo. This is Adenosine kinase (AK) from Toxoplasma gondii.